The following is a 513-amino-acid chain: GMP synthase [glutamine-hydrolyzing] (513 aa).

A Glutamine amidotransferase type-1 domain is found at 8–198; that stretch reads MILVLDFGSQ…VFGVCDCDGK (191 aa). The Nucleophile role is filled by C85. Active-site residues include H172 and E174. The GMPS ATP-PPase domain maps to 199 to 388; sequence WSMENFIEIE…LGIPDDIVWR (190 aa). 226–232 contributes to the ATP binding site; the sequence is SGGVDSS.

As to quaternary structure, homodimer.

The enzyme catalyses XMP + L-glutamine + ATP + H2O = GMP + L-glutamate + AMP + diphosphate + 2 H(+). Its pathway is purine metabolism; GMP biosynthesis; GMP from XMP (L-Gln route): step 1/1. In terms of biological role, catalyzes the synthesis of GMP from XMP. This Bacillus pumilus (strain SAFR-032) protein is GMP synthase [glutamine-hydrolyzing].